The primary structure comprises 1272 residues: Ubiquitin carboxyl-terminal hydrolase 2 (1272 aa).

Positions 736–1258 (TGINNIGNTC…TPYFLVYVKQ (523 aa)) constitute a USP domain. The active-site Nucleophile is the cysteine 745. The segment at 884–918 (DGLNGDVGTDANRKKNESNDAEVSENEDTTGLTSP) is disordered. The span at 902-911 (NDAEVSENED) shows a compositional bias: acidic residues. At serine 907 the chain carries Phosphoserine. Histidine 1209 serves as the catalytic Proton acceptor.

The protein belongs to the peptidase C19 family. As to quaternary structure, forms a ternary complex with RSP5 and RUP1. Interacts with RSP5. Interacts with FZO1.

The enzyme catalyses Thiol-dependent hydrolysis of ester, thioester, amide, peptide and isopeptide bonds formed by the C-terminal Gly of ubiquitin (a 76-residue protein attached to proteins as an intracellular targeting signal).. In terms of biological role, has an ATP-independent isopeptidase activity, cleaving at the C-terminus of the ubiquitin moiety in natural or engineered linear fusion proteins, irrespective of their size or the presence of an N-terminal extension to ubiquitin. Hydrolyzes polyubiquitinated 'Lys-63' polyubiquitin chains in RPO21, producing mono-ubiquitinated RNA polymerase II. Removes ubiquitin chains that initiate proteolysis of FZO1 and inhibit mitochondrial fusion. This Saccharomyces cerevisiae (strain ATCC 204508 / S288c) (Baker's yeast) protein is Ubiquitin carboxyl-terminal hydrolase 2 (UBP2).